The following is a 277-amino-acid chain: MEVIPNINSRRAGLIARIKLIVRGDLTTGNYDPVLAESFSGCIPTRSAFQFSGADGVESAFPVEYVMRMMNDWAKGECNPYIKIQNTGVSVLIEGFFDPPINATKAPLCTDKVNVLLNTTESTGIVLSDINKIKQSIGVDCRPFQACLIVNCFVRLPIVQLAFRFVGPSDPGRTTKLLDSAIAAYDAKIRQRRKRNLQIMESKSQDHTSDGCIPIPIIDETHRSGITGESKSLFGMFKNIASGECVTTIRIPRYIVMLWIFSVLLAMVTWGSYRLYS.

The Perinuclear space segment spans residues 1–250 (MEVIPNINSR…ASGECVTTIR (250 aa)). A helical membrane pass occupies residues 251 to 271 (IPRYIVMLWIFSVLLAMVTWG). The Nuclear segment spans residues 272 to 277 (SYRLYS).

It belongs to the herpesviridae NEC2 protein family. As to quaternary structure, forms a heterohexameric complex with NEC1. Post-translationally, phosphorylated.

It is found in the host nucleus inner membrane. Plays an essential role in virion nuclear egress, the first step of virion release from infected cell. Within the host nucleus, NEC1 interacts with the newly formed capsid through the vertexes and directs it to the inner nuclear membrane by associating with NEC2. Induces the budding of the capsid at the inner nuclear membrane as well as its envelopment into the perinuclear space. There, the NEC1/NEC2 complex promotes the fusion of the enveloped capsid with the outer nuclear membrane and the subsequent release of the viral capsid into the cytoplasm where it will reach the secondary budding sites in the host Golgi or trans-Golgi network. The polypeptide is Nuclear egress protein 2 (Gallid herpesvirus 2 (strain Chicken/Md5/ATCC VR-987) (GaHV-2)).